We begin with the raw amino-acid sequence, 435 residues long: Histidine--tRNA ligase (435 aa).

The protein belongs to the class-II aminoacyl-tRNA synthetase family.

Its subcellular location is the cytoplasm. It catalyses the reaction tRNA(His) + L-histidine + ATP = L-histidyl-tRNA(His) + AMP + diphosphate + H(+). The polypeptide is Histidine--tRNA ligase (hisS) (Aeropyrum pernix (strain ATCC 700893 / DSM 11879 / JCM 9820 / NBRC 100138 / K1)).